Reading from the N-terminus, the 358-residue chain is Phosphoribosylformylglycinamidine cyclo-ligase (358 aa).

This sequence belongs to the AIR synthase family.

The protein resides in the cytoplasm. It catalyses the reaction 2-formamido-N(1)-(5-O-phospho-beta-D-ribosyl)acetamidine + ATP = 5-amino-1-(5-phospho-beta-D-ribosyl)imidazole + ADP + phosphate + H(+). Its pathway is purine metabolism; IMP biosynthesis via de novo pathway; 5-amino-1-(5-phospho-D-ribosyl)imidazole from N(2)-formyl-N(1)-(5-phospho-D-ribosyl)glycinamide: step 2/2. This is Phosphoribosylformylglycinamidine cyclo-ligase from Chromohalobacter salexigens (strain ATCC BAA-138 / DSM 3043 / CIP 106854 / NCIMB 13768 / 1H11).